A 216-amino-acid chain; its full sequence is Guanylate kinase (216 aa).

Residues Gly11–Leu189 form the Guanylate kinase-like domain. Gly18–Gly25 contacts ATP.

This sequence belongs to the guanylate kinase family.

The protein localises to the cytoplasm. The enzyme catalyses GMP + ATP = GDP + ADP. Functionally, essential for recycling GMP and indirectly, cGMP. The protein is Guanylate kinase of Clostridium perfringens (strain ATCC 13124 / DSM 756 / JCM 1290 / NCIMB 6125 / NCTC 8237 / Type A).